We begin with the raw amino-acid sequence, 347 residues long: CD5 antigen-like (347 aa).

A signal peptide spans methionine 1–alanine 19. 3 consecutive SRCR domains span residues valine 24–glutamate 125, valine 138–glutamate 239, and leucine 244–serine 346. Cystine bridges form between cysteine 33–cysteine 67, cysteine 49–cysteine 114, cysteine 62–cysteine 124, cysteine 96–cysteine 106, cysteine 163–cysteine 228, cysteine 176–cysteine 238, cysteine 208–cysteine 218, cysteine 253–cysteine 287, cysteine 269–cysteine 335, cysteine 282–cysteine 345, and cysteine 315–cysteine 325.

As to quaternary structure, interacts with FASN; the interaction is direct. Interacts (via SRCR2 and SRCR3) with pentameric IgM (via Fc region); disulfide-linked. Not N-glycosylated. Probably not O-glycosylated. Expressed in spleen, lymph node, thymus, bone marrow, and fetal liver, but not in non-lymphoid tissues.

The protein resides in the secreted. It is found in the cytoplasm. Its function is as follows. Secreted protein that acts as a key regulator of lipid synthesis: mainly expressed by macrophages in lymphoid and inflamed tissues and regulates mechanisms in inflammatory responses, such as infection or atherosclerosis. Able to inhibit lipid droplet size in adipocytes. Following incorporation into mature adipocytes via CD36-mediated endocytosis, associates with cytosolic FASN, inhibiting fatty acid synthase activity and leading to lipolysis, the degradation of triacylglycerols into glycerol and free fatty acids (FFA). CD5L-induced lipolysis occurs with progression of obesity: participates in obesity-associated inflammation following recruitment of inflammatory macrophages into adipose tissues, a cause of insulin resistance and obesity-related metabolic disease. Regulation of intracellular lipids mediated by CD5L has a direct effect on transcription regulation mediated by nuclear receptors ROR-gamma (RORC). Acts as a key regulator of metabolic switch in T-helper Th17 cells. Regulates the expression of pro-inflammatory genes in Th17 cells by altering the lipid content and limiting synthesis of cholesterol ligand of RORC, the master transcription factor of Th17-cell differentiation. CD5L is mainly present in non-pathogenic Th17 cells, where it decreases the content of polyunsaturated fatty acyls (PUFA), affecting two metabolic proteins MSMO1 and CYP51A1, which synthesize ligands of RORC, limiting RORC activity and expression of pro-inflammatory genes. Participates in obesity-associated autoimmunity via its association with IgM, interfering with the binding of IgM to Fcalpha/mu receptor and enhancing the development of long-lived plasma cells that produce high-affinity IgG autoantibodies. Also acts as an inhibitor of apoptosis in macrophages: promotes macrophage survival from the apoptotic effects of oxidized lipids in case of atherosclerosis. Involved in early response to microbial infection against various pathogens by acting as a pattern recognition receptor and by promoting autophagy. This Homo sapiens (Human) protein is CD5 antigen-like (CD5L).